The chain runs to 156 residues: MAVNVSRVIKTLGDDFTVIDASGHILGRLSSKIAKRLLNGERIVVVNAEKAVITGDKYMVFERYKEKYDRGSKEKGPYFPRHPERIFKRTVRGMLPWKSSRGRDAYRRLRVFMGVPEELQGREFEKIEDALLEKVSKTDKYVTLAEVSRYLGFRGV.

This sequence belongs to the universal ribosomal protein uL13 family. As to quaternary structure, part of the 50S ribosomal subunit.

In terms of biological role, this protein is one of the early assembly proteins of the 50S ribosomal subunit, although it is not seen to bind rRNA by itself. It is important during the early stages of 50S assembly. The sequence is that of Large ribosomal subunit protein uL13 from Archaeoglobus fulgidus (strain ATCC 49558 / DSM 4304 / JCM 9628 / NBRC 100126 / VC-16).